Reading from the N-terminus, the 151-residue chain is Transcriptional regulator SyrB (151 aa).

A disordered region spans residues 1 to 61 (MADESNTGPV…RYSEQERNDK (61 aa)). The segment covering 33–48 (PQKAAAEPAQPKAPAA) has biased composition (low complexity). A compositionally biased stretch (basic and acidic residues) spans 52 to 61 (RYSEQERNDK).

This sequence belongs to the SyrB family.

Its function is as follows. Responsible for the repression of SyrM activity. This Rhizobium meliloti (strain 1021) (Ensifer meliloti) protein is Transcriptional regulator SyrB (syrB).